The following is a 73-amino-acid chain: Translation initiation factor IF-1 (73 aa).

The S1-like domain occupies 1 to 73 (MAKKDGAIEV…SRGRIVYRYK (73 aa)).

Belongs to the IF-1 family. Component of the 30S ribosomal translation pre-initiation complex which assembles on the 30S ribosome in the order IF-2 and IF-3, IF-1 and N-formylmethionyl-tRNA(fMet); mRNA recruitment can occur at any time during PIC assembly.

It localises to the cytoplasm. Its function is as follows. One of the essential components for the initiation of protein synthesis. Stabilizes the binding of IF-2 and IF-3 on the 30S subunit to which N-formylmethionyl-tRNA(fMet) subsequently binds. Helps modulate mRNA selection, yielding the 30S pre-initiation complex (PIC). Upon addition of the 50S ribosomal subunit IF-1, IF-2 and IF-3 are released leaving the mature 70S translation initiation complex. The protein is Translation initiation factor IF-1 of Mycolicibacterium smegmatis (strain ATCC 700084 / mc(2)155) (Mycobacterium smegmatis).